We begin with the raw amino-acid sequence, 391 residues long: UDP-N-acetylglucosamine--N-acetylmuramyl-(pentapeptide) pyrophosphoryl-undecaprenol N-acetylglucosamine transferase (391 aa).

UDP-N-acetyl-alpha-D-glucosamine-binding positions include 11 to 13 (TGG), arginine 176, serine 206, and glutamine 312.

This sequence belongs to the glycosyltransferase 28 family. MurG subfamily.

Its subcellular location is the cell inner membrane. The catalysed reaction is di-trans,octa-cis-undecaprenyl diphospho-N-acetyl-alpha-D-muramoyl-L-alanyl-D-glutamyl-meso-2,6-diaminopimeloyl-D-alanyl-D-alanine + UDP-N-acetyl-alpha-D-glucosamine = di-trans,octa-cis-undecaprenyl diphospho-[N-acetyl-alpha-D-glucosaminyl-(1-&gt;4)]-N-acetyl-alpha-D-muramoyl-L-alanyl-D-glutamyl-meso-2,6-diaminopimeloyl-D-alanyl-D-alanine + UDP + H(+). It participates in cell wall biogenesis; peptidoglycan biosynthesis. Functionally, cell wall formation. Catalyzes the transfer of a GlcNAc subunit on undecaprenyl-pyrophosphoryl-MurNAc-pentapeptide (lipid intermediate I) to form undecaprenyl-pyrophosphoryl-MurNAc-(pentapeptide)GlcNAc (lipid intermediate II). This Treponema denticola (strain ATCC 35405 / DSM 14222 / CIP 103919 / JCM 8153 / KCTC 15104) protein is UDP-N-acetylglucosamine--N-acetylmuramyl-(pentapeptide) pyrophosphoryl-undecaprenol N-acetylglucosamine transferase.